A 276-amino-acid polypeptide reads, in one-letter code: MSDLIKIIDQAFEDRANITPATKGEVVEAVEEALSLLDSGKRRVAELGDNGEWVVNQWLKKAVLLSFRLTGNAPMNGGYDKVPLKFTNWSEDQFKQAGFRAVPGAVVRRGAFISKGAVLMPSFVNIGAYVGENTMVDTWATVGSCAQIGANVHISGGAGIGGVLEPLQAGPVIIGDNAFIGARSEVAEGVTVGEGAVLSMGVFIGASTRIIDRATGEIHMGKVPPYAVVVPGSLPGKPLPDGRPGPSLYCAVIVKTADERTRSKTSINQLLREAQN.

Substrate-binding residues include arginine 100 and aspartate 137.

It belongs to the transferase hexapeptide repeat family. Homotrimer.

The protein localises to the cytoplasm. It carries out the reaction (S)-2,3,4,5-tetrahydrodipicolinate + succinyl-CoA + H2O = (S)-2-succinylamino-6-oxoheptanedioate + CoA. It functions in the pathway amino-acid biosynthesis; L-lysine biosynthesis via DAP pathway; LL-2,6-diaminopimelate from (S)-tetrahydrodipicolinate (succinylase route): step 1/3. The sequence is that of 2,3,4,5-tetrahydropyridine-2,6-dicarboxylate N-succinyltransferase from Zymomonas mobilis subsp. mobilis (strain ATCC 31821 / ZM4 / CP4).